The chain runs to 340 residues: MRFMGSPVISARNVWKIFGKDPVGYLKTLQPGRSFDDIRADGYIAGVRDVSLDVARGEMLVIMGLSGSGKSTLVRCFSRLHEITGGSIEVDGQIIGDLSEKDLIELRRNKMGMVFQSFGLLPHRTVLDNVAFPLEMRGQDRHTRRKRALEVIELVGLAGREDYFPRELSGGQQQRVGIARSLAIEPDIWFLDEPFSALDPLIRREMQDEFLRLQAMLGKTIVFITHDFDEALRLADRIAIMKDGAVEQCDTPDQIVMNPTTGYVAKFTEEIDKARVVHAGVLARAGVVGEGQPVEAGATVQQLARLLVNDSRDLIPVADKGQVIGALDRQGALDILLKAS.

The 237-residue stretch at 32–268 folds into the ABC transporter domain; that stretch reads GRSFDDIRAD…PTTGYVAKFT (237 aa). 64 to 71 serves as a coordination point for ATP; sequence GLSGSGKS.

The protein belongs to the ABC transporter superfamily. The complex is probably composed of two ATP-binding proteins (TmoW), two transmembrane proteins (TmoV) and a solute-binding protein (TmoX).

It is found in the cell inner membrane. It carries out the reaction a quaternary ammonium(out) + ATP + H2O = a quaternary ammonium(in) + ADP + phosphate + H(+). In terms of biological role, part of the ABC transporter complex TmoXWV involved in trimethylamine N-oxide (TMAO) import. Responsible for energy coupling to the transport system. Is specific for TMAO and essential for TMAO metabolism. In Ruegeria pomeroyi (strain ATCC 700808 / DSM 15171 / DSS-3) (Silicibacter pomeroyi), this protein is Trimethylamine N-oxide transport system ATP-binding protein TmoW.